Here is a 310-residue protein sequence, read N- to C-terminus: MYKLAAIVGPTAVGKTNISLEVARQINGEIISCDSMQLYRGMNIGTAKASKEEQNIVAHHLIDIADPHENFTVARYQSLVKDLISTINARGKIPILVGGTGLYYQSVVDDYTFFPMEVRQSIRDKWNAIIQEKGLPHVYRLLEQIDPAYAQIISPNDQKRVVRALEVYELTGKAFSTLQDRAENTYYLAVVGLYLERRELYARIERRVDEMIKKGLIEEVAALREKGIDLSYNSMQALGYKQVFYFLEGFINREELLNEIKRETRRYAKRQLTWFKKDQRIKWFNVGDFSDEELLVKNICTFMEGQFGIV.

9 to 16 (GPTAVGKT) lines the ATP pocket. Residue 11–16 (TAVGKT) participates in substrate binding. The segment at 34-37 (DSMQ) is interaction with substrate tRNA.

The protein belongs to the IPP transferase family. In terms of assembly, monomer. Requires Mg(2+) as cofactor.

It carries out the reaction adenosine(37) in tRNA + dimethylallyl diphosphate = N(6)-dimethylallyladenosine(37) in tRNA + diphosphate. Functionally, catalyzes the transfer of a dimethylallyl group onto the adenine at position 37 in tRNAs that read codons beginning with uridine, leading to the formation of N6-(dimethylallyl)adenosine (i(6)A). The protein is tRNA dimethylallyltransferase of Syntrophomonas wolfei subsp. wolfei (strain DSM 2245B / Goettingen).